The chain runs to 1300 residues: Kinesin-like protein KIN-4C (1300 aa).

The Kinesin motor domain occupies 6–360; that stretch reads CVRVAVNIRP…LKYANRARNI (355 aa). 85 to 92 contacts ATP; the sequence is GQTGSGKT. Coiled coils occupy residues 580–615, 653–697, and 781–823; these read TSVL…LASI, QLMR…RAWK, and EVTV…AKIS. 2 stretches are compositionally biased toward basic and acidic residues: residues 956 to 971 and 1001 to 1013; these read ADEN…KQET and EWKP…RESE. 4 disordered regions span residues 956–1018, 1097–1132, 1144–1187, and 1200–1300; these read ADEN…ESVI, NADG…QQQV, ALAD…RKKW, and PALP…TRRV. Composition is skewed to polar residues over residues 1169-1180, 1205-1222, 1230-1239, and 1275-1288; these read IGNTTGKSNVPR, THTN…TVDS, NSDSGESNSI, and GFVQ…SGSR. A compositionally biased stretch (basic and acidic residues) spans 1289-1300; it reads TSDEKENHTRRV.

This sequence belongs to the TRAFAC class myosin-kinesin ATPase superfamily. Kinesin family. KIN-4 subfamily. As to quaternary structure, homodimer.

In terms of biological role, kinesin-like motor protein involved in the control of the oriented deposition of cellulose microfibrils. This chain is Kinesin-like protein KIN-4C, found in Arabidopsis thaliana (Mouse-ear cress).